Consider the following 818-residue polypeptide: Auxin response factor 12 (818 aa).

Residues 1 to 10 are compositionally biased toward low complexity; it reads MSSSSAASIG. The disordered stretch occupies residues 1–24; it reads MSSSSAASIGPPQPPPPPAPPEEE. Residues 11-20 show a composition bias toward pro residues; the sequence is PPQPPPPPAP. The TF-B3 DNA-binding region spans 135–237; it reads FCKTLTASDT…QLLLGIRRAS (103 aa). 2 disordered regions span residues 526–565 and 629–648; these read NDQK…FSDP and GSVL…NKIG. Residues 629 to 640 are compositionally biased toward polar residues; it reads GSVLHNSPTSKD. A PB1 domain is found at 719 to 803; sequence RTFVKVYKSG…WYIKILSPED (85 aa).

It belongs to the ARF family. As to quaternary structure, homodimers and heterodimers. Expressed in roots, culms, leaves and young panicles.

It is found in the nucleus. Functionally, auxin response factors (ARFs) are transcriptional factors that bind specifically to the DNA sequence 5'-TGTCTC-3' found in the auxin-responsive promoter elements (AuxREs). This Oryza sativa subsp. japonica (Rice) protein is Auxin response factor 12 (ARF12).